Consider the following 146-residue polypeptide: Snake venom vascular endothelial growth factor toxin (146 aa).

The N-terminal stretch at 1-24 is a signal peptide; sequence MAAYLLAVAILFCIQGWPLGTVQG. Gln-25 is modified (pyrrolidone carboxylic acid). Cystine bridges form between Cys-38–Cys-80, Cys-69–Cys-115, and Cys-73–Cys-117. A disordered region spans residues 118–146; sequence RPRSASGVNSRKHKRNPEEGEQRAKFPFV. The segment covering 133–146 has biased composition (basic and acidic residues); sequence NPEEGEQRAKFPFV.

Belongs to the PDGF/VEGF growth factor family. Snake venom VEGF subfamily. Homodimer; disulfide-linked. Interacts with VEGF receptor-1 (FLT1) with a high affinity, whereas it binds to VEGF receptor-2 (KDR) with a low affinity. Does not bind VEGF receptor-3 (FLT4). Expressed by the venom gland.

Its subcellular location is the secreted. Its function is as follows. Snake venom VEGFs that may contribute to venom dispersion and prey subjugation by inducing vascular permeability and hypotension. This protein induces an increase in capillary permeability after intradermal injection, as well as a drastic hypotensive effect after intravenous injection. The hypotension is mediated by nitric oxide (NO), which is produced by VEGF-activated endothelium NO synthase. Also induces angiogenesis in vitro. Like other crotalid VEGFs, this protein interacts with VEGF receptor-1 (FLT1) with a high affinity, whereas it binds to VEGF receptor-2 (KDR) with a low affinity. This Bothrops erythromelas (Caatinga lance head) protein is Snake venom vascular endothelial growth factor toxin.